A 750-amino-acid chain; its full sequence is von Willebrand factor A domain-containing protein DDB_G0292188 (750 aa).

The region spanning Glu-17–Val-249 is the VWFA domain. Composition is skewed to low complexity over residues Ser-586–Asn-595 and Pro-603–Ser-645. The segment at Ser-586–Gln-657 is disordered.

The protein is von Willebrand factor A domain-containing protein DDB_G0292188 of Dictyostelium discoideum (Social amoeba).